A 918-amino-acid polypeptide reads, in one-letter code: MRRSAAPSQVLGNVAKKPRFIPPGKSNALCPKIETEETDQDVKLKEIGEKHGNASLFSEMFSENQSENFTQSVESSGKVKSTKAWNSTSKCSKLEMKTQSAPKADAMHLPTSGMAKEAAAQEEPDCLTKYFSVMWCKASKKKHKKWEGDAILITKGKSVILKDMEGKDIGRGTGYKSKELDSLEEGQTLMIGGKEIEVMGVISADDFSSGRCFQAGIATHDTVPTALPQTTMKQFCKPIKSACQPSTKENILLNPQSCKPRHNPNDTNSLVMPRPNASHQCMFNKAGLPVVDVVVDPYIANNLRPHQREGIVFLYECVMGMRVSGRFGAILADEMGLGKTLQCISLVWTLLRQGVYGCKPVLKRALIVTPGSLVKNWKKEFQKWLGSERIKVFTVDQDHKVEEFISSPLYSVMIISYEMLLRSLDQIQAIEFNLLICDEGHRLKNSSIKTTTALTNLSCERRIILTGTPIQNDLQEFYALIEFVNPGVLGSLSTYRKIYEEPIVRSREPSATKEEKDLGEKRAAELTRLTGLFILRRTQEVINKFLPPKKENIIFCQPTALQLELYRKLLSSRVISSCLQGRLENSPHLICIGALKKLCNHPCLLFKALKEKCCDPKSDEHVESSLYEGLTDVFPQDYTSDTFSEIDSGKLQVLVKLLAAIRELSSSERVVLVSNYTQTLNVLLETCKCYGYSYTRLDGNTPVSQRQQIVDSFNSKFSPAFIFLLSSKAGGVGLNLVGASHLILYDIDWNPATDIQAMARVWRDGQKCTVHIYRLLTTGTIEEKIYQRQISKQDLSGAVVDLSKTSEHIHFSVEELRNLFTLHENSSCVTHDLLECDCMGNKDHQNPSSKKPSVSRCCQLRQDQGKHNSKKPLSMSQLMQWKHFSGQHQALPDPFLERIKENVSFIFQNVTNATSPTQ.

The segment covering 1 to 11 (MRRSAAPSQVL) has biased composition (polar residues). The tract at residues 1-29 (MRRSAAPSQVLGNVAKKPRFIPPGKSNAL) is disordered. The 168-residue stretch at 320–487 (GMRVSGRFGA…YALIEFVNPG (168 aa)) folds into the Helicase ATP-binding domain. ATP is bound at residue 333 to 340 (DEMGLGKT). The DEGH box signature appears at 438–441 (DEGH). The Helicase C-terminal domain maps to 653–817 (VLVKLLAAIR…HIHFSVEELR (165 aa)). The tract at residues 842 to 873 (KDHQNPSSKKPSVSRCCQLRQDQGKHNSKKPL) is disordered.

It belongs to the SNF2/RAD54 helicase family.

It is found in the nucleus. Functionally, involved in DNA repair and mitotic recombination. The sequence is that of DNA repair and recombination protein RAD54B (RAD54B) from Gallus gallus (Chicken).